We begin with the raw amino-acid sequence, 329 residues long: Protein-arginine N-acetylglucosaminyltransferase NleB1 (329 aa).

Arg13 carries N-beta-linked (GlcNAc) arginine; by autocatalysis glycosylation. 48-50 (QWF) is a binding site for UDP-N-acetyl-alpha-D-glucosamine. N-beta-linked (GlcNAc) arginine; by autocatalysis glycosylation is present at Arg53. Tyr72 contacts UDP-N-acetyl-alpha-D-glucosamine. An N-beta-linked (GlcNAc) arginine; by autocatalysis glycan is attached at Arg159. 219 to 222 (YLDA) serves as a coordination point for UDP-N-acetyl-alpha-D-glucosamine. Residues 221 to 223 (DAD) carry the DXD motif motif. Asp223 provides a ligand contact to Mn(2+). The active-site Proton acceptor is the Glu253. N-beta-linked (GlcNAc) arginine; by autocatalysis glycosylation occurs at Arg293. 2 residues coordinate Mn(2+): Asn320 and Ser322. UDP-N-acetyl-alpha-D-glucosamine-binding positions include Ser322 and 327 to 329 (SSW).

The protein belongs to the glycosyltransferase NleB family. Requires Mn(2+) as cofactor. Post-translationally, auto-glycosylated: arginine GlcNAcylation is required for activity toward death domain-containing host target proteins.

The protein localises to the secreted. Its subcellular location is the host cytoplasm. The catalysed reaction is L-arginyl-[protein] + UDP-N-acetyl-alpha-D-glucosamine = N(omega)-(N-acetyl-beta-D-glucosaminyl)-L-arginyl-[protein] + UDP + H(+). With respect to regulation, protein-arginine N-acetylglucosaminyltransferase activity is inhibited by 100066N compound (flavone analog) and 102644N compound (a substituted isoxazole). Functionally, protein-arginine N-acetylglucosaminyltransferase effector that disrupts TNF signaling in infected cells, including NF-kappa-B signaling, apoptosis and necroptosis. Acts by catalyzing the transfer of a single N-acetylglucosamine (GlcNAc) to a conserved arginine residue in the death domain of host proteins such as FADD: arginine GlcNAcylation prevents homotypic/heterotypic death domain interactions and assembly of the oligomeric TNF-alpha receptor complex, thereby disrupting TNF signaling. Also acts on host proteins without a death domain: catalyzes arginine GlcNAcylation of host GAPDH protein, thereby preventing GAPDH interaction with TRAF2, leading to inhibit NF-kappa-B signaling. Catalyzes auto-GlcNAcylation, which is required for activity toward death domain-containing host target proteins. This is Protein-arginine N-acetylglucosaminyltransferase NleB1 from Escherichia coli O157:H7.